A 69-amino-acid chain; its full sequence is Sodium channel toxin (69 aa).

Residues 2-66 (KNDYPVDTAK…SPTKTSGRCN (65 aa)) form the LCN-type CS-alpha/beta domain. 4 disulfide bridges follow: Cys-14/Cys-65, Cys-18/Cys-41, Cys-27/Cys-48, and Cys-31/Cys-50.

The protein belongs to the long (4 C-C) scorpion toxin superfamily. Sodium channel inhibitor family. As to expression, expressed by the venom gland.

It localises to the secreted. In terms of biological role, inhibits voltage-gated sodium channels (Nav). This Tityus metuendus (Scorpion) protein is Sodium channel toxin.